The sequence spans 90 residues: MIEKRNFALRDKEGNEIGVFSGKQPRQAALKAANRGFTDIRLRERGTKKVHIFQGERIQVPKPSNAPKWMPANIWKPNVKKLGVEKLEDI.

Protects DNA against thermal denaturation and modulates transcription. In Methanothrix soehngenii (Methanosaeta concilii), this protein is Chromosomal protein MC1c.